The primary structure comprises 78 residues: Esculentin-2PLa (78 aa).

The signal sequence occupies residues 1–22 (MFTTKKSMLLLFFLGTISLSLC). A propeptide spanning residues 23 to 39 (EEERGADEEEGDGEKLM) is cleaved from the precursor. An intrachain disulfide couples Cys-72 to Cys-78.

In terms of tissue distribution, expressed by the skin glands.

The protein resides in the secreted. In terms of biological role, antimicrobial activity against the Gram-negative bacterium E.coli, the Gram-positive bacterium S.aureus and the yeast C.albicans. The sequence is that of Esculentin-2PLa from Lithobates palustris (Pickerel frog).